We begin with the raw amino-acid sequence, 291 residues long: Elongation factor Ts (291 aa).

Residues threonine 80–valine 83 form an involved in Mg(2+) ion dislocation from EF-Tu region.

The protein belongs to the EF-Ts family.

The protein localises to the cytoplasm. In terms of biological role, associates with the EF-Tu.GDP complex and induces the exchange of GDP to GTP. It remains bound to the aminoacyl-tRNA.EF-Tu.GTP complex up to the GTP hydrolysis stage on the ribosome. The polypeptide is Elongation factor Ts (Acinetobacter baumannii (strain AB307-0294)).